A 199-amino-acid chain; its full sequence is Recombination protein RecR (199 aa).

The C4-type zinc finger occupies 58–73 (CRRCFNLTEGEECDIC). In terms of domain architecture, Toprim spans 81–176 (SVICVVEDPY…RVTALASGLP (96 aa)).

It belongs to the RecR family.

May play a role in DNA repair. It seems to be involved in an RecBC-independent recombinational process of DNA repair. It may act with RecF and RecO. This Rubrobacter xylanophilus (strain DSM 9941 / JCM 11954 / NBRC 16129 / PRD-1) protein is Recombination protein RecR.